We begin with the raw amino-acid sequence, 858 residues long: Heat shock protein 105 kDa (858 aa).

Residue serine 2 is modified to N-acetylserine. Lysine 471 bears the N6-acetyllysine mark. 2 disordered regions span residues 500-584 (KVPT…PPEA) and 796-858 (CEPV…MDLD). The segment covering 504–514 (EENEMSSEADM) has biased composition (acidic residues). Phosphoserine is present on residues serine 509 and serine 510. The segment covering 532–554 (QQDNSEAGTQPQVQTDAQQTSQS) has biased composition (polar residues). Serine 557 is subject to Phosphoserine. The residue at position 561 (threonine 561) is a Phosphothreonine. Composition is skewed to basic and acidic residues over residues 563 to 584 (EENKIPDADKANEKKVDQPPEA) and 805 to 814 (PKIESPKLER). Serine 809 is modified (phosphoserine). Phosphothreonine is present on threonine 815. Positions 821 to 832 (IDKKEEDLEDKN) are enriched in basic and acidic residues. Polar residues predominate over residues 849 to 858 (EKNSVNMDLD).

It belongs to the heat shock protein 70 family. Interacts with HSPA8/HSC70. Interacts with HSPA1A (via NBD) and HSPA1B (via NBD). Post-translationally, phosphorylation on Ser-509 may be important for regulation of the HSPA8/HSC70 chaperone activity.

Its subcellular location is the cytoplasm. In terms of biological role, acts as a nucleotide-exchange factor (NEF) for chaperone proteins HSPA1A and HSPA1B, promoting the release of ADP from HSPA1A/B thereby triggering substrate release. Prevents the aggregation of denatured proteins in cells under severe stress, on which the ATP levels decrease markedly. Inhibits HSPA8/HSC70 ATPase and chaperone activities. This Pongo abelii (Sumatran orangutan) protein is Heat shock protein 105 kDa (HSPH1).